A 304-amino-acid chain; its full sequence is Bifunctional protein FolD (304 aa).

Residues 170–172 (GRS), Ser-195, and Ile-236 contribute to the NADP(+) site.

This sequence belongs to the tetrahydrofolate dehydrogenase/cyclohydrolase family. In terms of assembly, homodimer.

It catalyses the reaction (6R)-5,10-methylene-5,6,7,8-tetrahydrofolate + NADP(+) = (6R)-5,10-methenyltetrahydrofolate + NADPH. It carries out the reaction (6R)-5,10-methenyltetrahydrofolate + H2O = (6R)-10-formyltetrahydrofolate + H(+). It participates in one-carbon metabolism; tetrahydrofolate interconversion. In terms of biological role, catalyzes the oxidation of 5,10-methylenetetrahydrofolate to 5,10-methenyltetrahydrofolate and then the hydrolysis of 5,10-methenyltetrahydrofolate to 10-formyltetrahydrofolate. This is Bifunctional protein FolD from Anaplasma phagocytophilum (strain HZ).